We begin with the raw amino-acid sequence, 133 residues long: Profilin Sal k 4.0101 (133 aa).

Residues cysteine 95 and cysteine 117 are joined by a disulfide bond.

This sequence belongs to the profilin family. Occurs in many kinds of cells as a complex with monomeric actin in a 1:1 ratio. Expressed in pollen.

The protein resides in the cytoplasm. It localises to the cytoskeleton. Binds to actin and affects the structure of the cytoskeleton. At high concentrations, profilin prevents the polymerization of actin, whereas it enhances it at low concentrations. This is Profilin Sal k 4.0101 from Kali turgidum (Prickly saltwort).